The chain runs to 300 residues: Light-independent protochlorophyllide reductase iron-sulfur ATP-binding protein (300 aa).

Residues glycine 43–threonine 48 and lysine 72 each bind ATP. Serine 47 is a binding site for Mg(2+). Positions 128 and 162 each coordinate [4Fe-4S] cluster. Asparagine 213 to arginine 214 contacts ATP.

Belongs to the NifH/BchL/ChlL family. Homodimer. Protochlorophyllide reductase is composed of three subunits; ChlL, ChlN and ChlB. The cofactor is [4Fe-4S] cluster.

The enzyme catalyses chlorophyllide a + oxidized 2[4Fe-4S]-[ferredoxin] + 2 ADP + 2 phosphate = protochlorophyllide a + reduced 2[4Fe-4S]-[ferredoxin] + 2 ATP + 2 H2O. It functions in the pathway porphyrin-containing compound metabolism; chlorophyll biosynthesis (light-independent). Functionally, component of the dark-operative protochlorophyllide reductase (DPOR) that uses Mg-ATP and reduced ferredoxin to reduce ring D of protochlorophyllide (Pchlide) to form chlorophyllide a (Chlide). This reaction is light-independent. The L component serves as a unique electron donor to the NB-component of the complex, and binds Mg-ATP. This chain is Light-independent protochlorophyllide reductase iron-sulfur ATP-binding protein, found in Synechococcus sp. (strain RCC307).